The chain runs to 68 residues: Large ribosomal subunit protein bL31 (68 aa).

Cysteine 16, cysteine 18, cysteine 37, and cysteine 40 together coordinate Zn(2+).

It belongs to the bacterial ribosomal protein bL31 family. Type A subfamily. As to quaternary structure, part of the 50S ribosomal subunit. Zn(2+) is required as a cofactor.

Binds the 23S rRNA. In Aquifex aeolicus (strain VF5), this protein is Large ribosomal subunit protein bL31.